Here is a 283-residue protein sequence, read N- to C-terminus: Probable endonuclease 4 (283 aa).

Histidine 69, histidine 109, glutamate 144, aspartate 178, histidine 181, histidine 215, aspartate 228, histidine 230, and glutamate 260 together coordinate Zn(2+).

Belongs to the AP endonuclease 2 family. The cofactor is Zn(2+).

It catalyses the reaction Endonucleolytic cleavage to 5'-phosphooligonucleotide end-products.. Its function is as follows. Endonuclease IV plays a role in DNA repair. It cleaves phosphodiester bonds at apurinic or apyrimidinic (AP) sites, generating a 3'-hydroxyl group and a 5'-terminal sugar phosphate. This is Probable endonuclease 4 from Thermosipho melanesiensis (strain DSM 12029 / CIP 104789 / BI429).